The sequence spans 1141 residues: Envelopment polyprotein (1141 aa).

The signal sequence occupies residues 1 to 19; that stretch reads MFCLCLSLLGLLLCWPAAT. Residues 20–489 are Lumenal-facing; it reads RNLLELKVEC…CVPGLHGWAT (470 aa). 6 disulfide bridges follow: C29–C154, C63–C160, C112–C131, C136–C141, C178–C188, and C213–C252. N137 carries an N-linked (GlcNAc...) asparagine; by host glycan. The N-linked (GlcNAc...) asparagine; by host glycan is linked to N352. 4 disulfide bridges follow: C381–C440, C385–C394, C410–C429, and C457–C480. A glycan (N-linked (GlcNAc...) asparagine; by host) is linked at N404. Residues 490–510 traverse the membrane as a helical segment; it reads ISLLITFCFGWLAIPLLSMII. The Cytoplasmic portion of the chain corresponds to 511 to 632; it reads IRFLLIFTYL…LSMFRYKSKC (122 aa). The binding to the ribonucleoprotein stretch occupies residues 521–538; the sequence is CSKYSTDSKFKLIIEKVK. 2 consecutive CCHC-type zinc fingers follow at residues 550-570 and 575-596; these read CEVC…KKSC and CPYC…FKVC. Binding to the ribonucleoprotein stretches follow at residues 593 to 610, 597 to 608, and 616 to 630; these read FKVC…KKSL, KLTTRFQENLKK, and KRGL…RYKS. The inhibition of interferon induction stretch occupies residues 612–653; the sequence is TYEPKRGLYRTLSMFRYKSKCYVGLVWCILLTMELIVWAASA. An ITAM domain is found at 616-639; it reads KRGLYRTLSMFRYKSKCYVGLVWC. Phosphotyrosine occurs at positions 620 and 633. The YxxL signature appears at 620–623; it reads YRTL. Residues 633–653 form a helical membrane-spanning segment; it reads YVGLVWCILLTMELIVWAASA. At 654 to 1109 the chain is on the lumenal side; the sequence is ETINLEPGWT…EWLLGILSGN (456 aa). 8 disulfides stabilise this stretch: C740-C775, C744-C782, C756-C889, C770-C900, C785-C908, C811-C820, C828-C837, and C868-C872. The tract at residues 762–782 is fusion loop; sequence FEFETGWGCNPPDCPGVGTGC. N-linked (GlcNAc...) asparagine; by host glycosylation occurs at N932. 5 disulfides stabilise this stretch: C974–C1004, C997–C1049, C1014–C1019, C1050–C1055, and C1089–C1093. Residues 1110–1130 form a helical membrane-spanning segment; it reads WMVVAVLIALFIFSLLLFSLC. Residues 1126–1141 are binding to the ribonucleoprotein; sequence LFSLCCPRRQNYKKNK. Topologically, residues 1131 to 1141 are cytoplasmic; sequence CPRRQNYKKNK.

It belongs to the hantavirus envelope glycoprotein family. Homodimer. Homotetramer; forms heterotetrameric Gn-Gc spikes in the pre-fusion conformation. Interacts (via C-terminus) with the nucleoprotein. Interacts with host TUFM; this interaction contributes to the virus-induced degradation of mitochondria by autophagy, which leads to degradation of host MAVS and inhibition of type I interferon (IFN) responses. Interacts with host MAP1LC3B; this interaction contributes to the virus-induced degradation of mitochondria by autophagy, which leads to degradation of host MAVS and inhibition of type I interferon (IFN) responses. As to quaternary structure, homodimer. Homotetramer; forms heterotetrameric Gn-Gc spikes in the pre-fusion conformation. Homotrimer; forms homotrimer in the post-fusion conformation at acidic pH. Interacts (via C-terminus) with the nucleoprotein. Post-translationally, envelope polyprotein precursor is quickly cleaved in vivo just after synthesis, presumably by host signal peptidase.

The protein resides in the virion membrane. It localises to the host cell surface. The protein localises to the host Golgi apparatus membrane. It is found in the host endoplasmic reticulum membrane. Its subcellular location is the host mitochondrion. Functionally, forms homotetramers with glycoprotein C at the surface of the virion. Attaches the virion to host cell receptors including integrin alpha5/ITGB1. This attachment induces virion internalization predominantly through clathrin-dependent endocytosis. Mediates the assembly and budding of infectious virus particles through its interaction with the nucleocapsid protein and the viral genome. May dysregulate normal immune and endothelial cell responses through an ITAM motif. Translocates to mitochondria, binds to host TUFM and recruits MAP1LC3B. These interactions induce mitochondrial autophagy and therefore destruction of host MAVS leading to inhibition of type I interferon (IFN) responses. Concomitant breakdown of glycoprotein N is apparently prevented by the nucleoprotein that may inhibit Gn-stimulated autophagosome-lysosome fusion. Interacts with the viral genomic RNA. Inhibits the host RIG-I/TBK1 pathway by disrupting the formation of TBK1-TRAF3 complexes and downstream signaling responses required for IFN-beta transcription. In terms of biological role, forms homotetramers with glycoprotein N at the surface of the virion. Attaches the virion to host cell receptors including integrin ITGAV/ITGB3. This attachment induces virion internalization predominantly through clathrin-dependent endocytosis. Class II fusion protein that promotes fusion of viral membrane with host endosomal membrane after endocytosis of the virion. The chain is Envelopment polyprotein (GP) from Tula orthohantavirus (TULV).